A 226-amino-acid polypeptide reads, in one-letter code: MKAIRIAIDGPASSGKSTVAKIIAKNLGYTYLDTGAMYRCATYIALKNNYSENDISAILKELSEHPITFKKADDGSQLVFLGTEDVTLAIRQNDVTNNVSWVSAIAEIREELVAQQRRIAQDGAIIMDGRDIGTVVLPDAELKIFLIASVDERAERRYRENLEKGIDSDFETLKEEIAARDFKDSHREVSPLKAADDAIVFDTTGVTIQGVVQFIQEKAEKIIDMS.

G10–T18 is an ATP binding site.

The protein belongs to the cytidylate kinase family. Type 1 subfamily.

It localises to the cytoplasm. It catalyses the reaction CMP + ATP = CDP + ADP. The catalysed reaction is dCMP + ATP = dCDP + ADP. This Streptococcus uberis (strain ATCC BAA-854 / 0140J) protein is Cytidylate kinase.